Reading from the N-terminus, the 125-residue chain is Protein ELF4-LIKE 1 (125 aa).

Positions 1–18 (MEASRNRSLVGNNRSPEM) are enriched in polar residues. The segment at 1-28 (MEASRNRSLVGNNRSPEMNENDGEDVAA) is disordered.

Belongs to the EARLY FLOWERING 4 family. Homodimer.

Its subcellular location is the nucleus. In terms of biological role, component of the central CCA1/LHY-TOC1 feedback loop in the circadian clock that promotes clock accuracy and is required for sustained rhythms in the absence of daily light/dark cycles. This Arabidopsis thaliana (Mouse-ear cress) protein is Protein ELF4-LIKE 1 (EFL1).